The sequence spans 224 residues: Octanoyltransferase (224 aa).

In terms of domain architecture, BPL/LPL catalytic spans 38–213 (SATVDELWWV…YLVRRLGYSA (176 aa)). Residues 77 to 84 (RGGQVTYH), 144 to 146 (SLG), and 157 to 159 (GLS) each bind substrate. C175 (acyl-thioester intermediate) is an active-site residue.

This sequence belongs to the LipB family.

The protein localises to the cytoplasm. The catalysed reaction is octanoyl-[ACP] + L-lysyl-[protein] = N(6)-octanoyl-L-lysyl-[protein] + holo-[ACP] + H(+). It participates in protein modification; protein lipoylation via endogenous pathway; protein N(6)-(lipoyl)lysine from octanoyl-[acyl-carrier-protein]: step 1/2. In terms of biological role, catalyzes the transfer of endogenously produced octanoic acid from octanoyl-acyl-carrier-protein onto the lipoyl domains of lipoate-dependent enzymes. Lipoyl-ACP can also act as a substrate although octanoyl-ACP is likely to be the physiological substrate. In Nitrosococcus oceani (strain ATCC 19707 / BCRC 17464 / JCM 30415 / NCIMB 11848 / C-107), this protein is Octanoyltransferase.